A 158-amino-acid chain; its full sequence is MMINTQEDKLVSAHDAEEFLRFFNCHDSALQQEATTLLTREAHLLDIQAYRTWLEHCVGSEVQYQVISRELRAASERRYKLNEAMNVYNENFQQLKVRVEHQLDSQNWSNSPKLRFTRFITNVQAAMDVNDEDLLHVRSNVVLHRARRGNQVDVFYAA.

This sequence belongs to the bacterial ring-hydroxylating dioxygenase beta subunit family. The naphthalene dioxygenase (NDO) multicomponent enzyme system is composed of an electron transfer component and a dioxygenase component (iron sulfur protein (ISP)). The electron transfer component is composed of a ferredoxin reductase (NdoR) and a ferredoxin (NdoA), and the dioxygenase component is formed of a heterohexamer (trimer of heterodimers) of three large alpha subunits (NdoB) and three small beta subunits (NdoC).

Its pathway is aromatic compound metabolism; naphthalene degradation. Its function is as follows. Component of the naphthalene dioxygenase (NDO) multicomponent enzyme system which catalyzes the incorporation of both atoms of molecular oxygen into naphthalene to form cis-(1R,2S)-dihydroxy-1,2-dihydronaphthalene. The beta subunit seems to have a structural role in the holoenzyme. This is Naphthalene 1,2-dioxygenase system, small oxygenase component from Pseudomonas fluorescens.